A 276-amino-acid chain; its full sequence is Phosphate import ATP-binding protein PstB (276 aa).

Residues 23–271 form the ABC transporter domain; sequence VNNKNIVYDT…PSDQRTEDYI (249 aa). Position 62 to 69 (62 to 69) interacts with ATP; that stretch reads GPSGCGKS.

The protein belongs to the ABC transporter superfamily. Phosphate importer (TC 3.A.1.7) family. In terms of assembly, the complex is composed of two ATP-binding proteins (PstB), two transmembrane proteins (PstC and PstA) and a solute-binding protein (PstS).

The protein resides in the cell membrane. It catalyses the reaction phosphate(out) + ATP + H2O = ADP + 2 phosphate(in) + H(+). Its function is as follows. Part of the ABC transporter complex PstSACB involved in phosphate import. Responsible for energy coupling to the transport system. In Oceanobacillus iheyensis (strain DSM 14371 / CIP 107618 / JCM 11309 / KCTC 3954 / HTE831), this protein is Phosphate import ATP-binding protein PstB.